The sequence spans 255 residues: GTP cyclohydrolase III (255 aa).

Belongs to the archaeal-type GTP cyclohydrolase family.

The catalysed reaction is GTP + 3 H2O = 2-amino-5-formylamino-6-(5-phospho-D-ribosylamino)pyrimidin-4(3H)-one + 2 phosphate + 2 H(+). Functionally, catalyzes the formation of 2-amino-5-formylamino-6-ribofuranosylamino-4(3H)-pyrimidinone ribonucleotide monophosphate and inorganic phosphate from GTP. Also has an independent pyrophosphate phosphohydrolase activity. The chain is GTP cyclohydrolase III from Methanosphaera stadtmanae (strain ATCC 43021 / DSM 3091 / JCM 11832 / MCB-3).